A 158-amino-acid chain; its full sequence is SsrA-binding protein (158 aa).

A compositionally biased stretch (basic and acidic residues) spans 133-148 (KAQDKRETSAKRDWNR). Residues 133–158 (KAQDKRETSAKRDWNRQKARLLKQNG) form a disordered region. Positions 149-158 (QKARLLKQNG) are enriched in basic residues.

This sequence belongs to the SmpB family.

The protein resides in the cytoplasm. In terms of biological role, required for rescue of stalled ribosomes mediated by trans-translation. Binds to transfer-messenger RNA (tmRNA), required for stable association of tmRNA with ribosomes. tmRNA and SmpB together mimic tRNA shape, replacing the anticodon stem-loop with SmpB. tmRNA is encoded by the ssrA gene; the 2 termini fold to resemble tRNA(Ala) and it encodes a 'tag peptide', a short internal open reading frame. During trans-translation Ala-aminoacylated tmRNA acts like a tRNA, entering the A-site of stalled ribosomes, displacing the stalled mRNA. The ribosome then switches to translate the ORF on the tmRNA; the nascent peptide is terminated with the 'tag peptide' encoded by the tmRNA and targeted for degradation. The ribosome is freed to recommence translation, which seems to be the essential function of trans-translation. This is SsrA-binding protein from Jannaschia sp. (strain CCS1).